The sequence spans 488 residues: Aspartyl/glutamyl-tRNA(Asn/Gln) amidotransferase subunit B (488 aa).

Belongs to the GatB/GatE family. GatB subfamily. Heterotrimer of A, B and C subunits.

It carries out the reaction L-glutamyl-tRNA(Gln) + L-glutamine + ATP + H2O = L-glutaminyl-tRNA(Gln) + L-glutamate + ADP + phosphate + H(+). The enzyme catalyses L-aspartyl-tRNA(Asn) + L-glutamine + ATP + H2O = L-asparaginyl-tRNA(Asn) + L-glutamate + ADP + phosphate + 2 H(+). Its function is as follows. Allows the formation of correctly charged Asn-tRNA(Asn) or Gln-tRNA(Gln) through the transamidation of misacylated Asp-tRNA(Asn) or Glu-tRNA(Gln) in organisms which lack either or both of asparaginyl-tRNA or glutaminyl-tRNA synthetases. The reaction takes place in the presence of glutamine and ATP through an activated phospho-Asp-tRNA(Asn) or phospho-Glu-tRNA(Gln). The protein is Aspartyl/glutamyl-tRNA(Asn/Gln) amidotransferase subunit B of Chlamydia trachomatis serovar L2 (strain ATCC VR-902B / DSM 19102 / 434/Bu).